We begin with the raw amino-acid sequence, 447 residues long: Tryptophan 5-hydroxylase 1 (447 aa).

The ACT domain occupies 22 to 97 (TLIFSLENEV…TVLSVDSPDQ (76 aa)). Residue serine 61 is modified to Phosphoserine; by PKA. L-tryptophan contacts are provided by tyrosine 238, arginine 260, and threonine 268. Positions 275, 280, and 320 each coordinate Fe cation. Positions 339 and 369 each coordinate L-tryptophan.

Belongs to the biopterin-dependent aromatic amino acid hydroxylase family. In terms of assembly, homotetramer. Interacts with DNAJC12. Fe(2+) serves as cofactor. In terms of processing, ubiquitinated, leading to its degradation by the proteasome. Ubiquitinated is triggered by phosphorylation. Post-translationally, phosphorylated; triggering degradation by the proteasome.

The catalysed reaction is (6R)-L-erythro-5,6,7,8-tetrahydrobiopterin + L-tryptophan + O2 = 5-hydroxy-L-tryptophan + (4aS,6R)-4a-hydroxy-L-erythro-5,6,7,8-tetrahydrobiopterin. The protein operates within aromatic compound metabolism; serotonin biosynthesis; serotonin from L-tryptophan: step 1/2. Functionally, oxidizes L-tryptophan to 5-hydroxy-l-tryptophan in the rate-determining step of serotonin biosynthesis. This Mus musculus (Mouse) protein is Tryptophan 5-hydroxylase 1.